A 302-amino-acid polypeptide reads, in one-letter code: Sulfate adenylyltransferase subunit 2 (302 aa).

The protein belongs to the PAPS reductase family. CysD subfamily. Heterodimer composed of CysD, the smaller subunit, and CysN.

The catalysed reaction is sulfate + ATP + H(+) = adenosine 5'-phosphosulfate + diphosphate. The protein operates within sulfur metabolism; hydrogen sulfide biosynthesis; sulfite from sulfate: step 1/3. In terms of biological role, with CysN forms the ATP sulfurylase (ATPS) that catalyzes the adenylation of sulfate producing adenosine 5'-phosphosulfate (APS) and diphosphate, the first enzymatic step in sulfur assimilation pathway. APS synthesis involves the formation of a high-energy phosphoric-sulfuric acid anhydride bond driven by GTP hydrolysis by CysN coupled to ATP hydrolysis by CysD. In Erwinia tasmaniensis (strain DSM 17950 / CFBP 7177 / CIP 109463 / NCPPB 4357 / Et1/99), this protein is Sulfate adenylyltransferase subunit 2.